A 207-amino-acid polypeptide reads, in one-letter code: Small ribosomal subunit protein uS10m (207 aa).

The transit peptide at M1–Y14 directs the protein to the mitochondrion.

This sequence belongs to the universal ribosomal protein uS10 family. In terms of assembly, part of the mitochondrial small ribosomal subunit.

The protein localises to the mitochondrion. Involved in mitochondrial genome encoded proteins translation. Involved in the binding of tRNA to the ribosomes. In Kluyveromyces lactis (strain ATCC 8585 / CBS 2359 / DSM 70799 / NBRC 1267 / NRRL Y-1140 / WM37) (Yeast), this protein is Small ribosomal subunit protein uS10m (RSM10).